The following is an 896-amino-acid chain: DNA double-strand break repair Rad50 ATPase (896 aa).

ATP contacts are provided by residues 32–38 (NGAGKSS) and Gln137. Coiled-coil stretches lie at residues 200-274 (RRYQ…KLQE), 412-505 (EEIR…LISM), 580-611 (IGDIEALRKQKDEVSKKLKDAEDRTHEIESEF), 636-669 (IKLAEDLKRQRETLREKVKDLRSRSAGMDEIQKR), and 702-731 (RSKVETLRSHVSEIEQRISDRERDIERMKK). One can recognise a Zinc-hook domain in the interval 411–507 (YEEIRRDIDE…KKRQLISMES (97 aa)). Zn(2+) is bound by residues Cys455 and Cys458.

This sequence belongs to the SMC family. RAD50 subfamily. Homodimer. Forms a heterotetramer composed of two Mre11 subunits and two Rad50 subunits. Zn(2+) is required as a cofactor.

Its function is as follows. Part of the Rad50/Mre11 complex, which is involved in the early steps of DNA double-strand break (DSB) repair. The complex may facilitate opening of the processed DNA ends to aid in the recruitment of HerA and NurA. Rad50 controls the balance between DNA end bridging and DNA resection via ATP-dependent structural rearrangements of the Rad50/Mre11 complex. The sequence is that of DNA double-strand break repair Rad50 ATPase from Thermoplasma acidophilum (strain ATCC 25905 / DSM 1728 / JCM 9062 / NBRC 15155 / AMRC-C165).